The following is a 208-amino-acid chain: Protein-L-isoaspartate O-methyltransferase (208 aa).

Residue Ser-59 is part of the active site.

It belongs to the methyltransferase superfamily. L-isoaspartyl/D-aspartyl protein methyltransferase family.

Its subcellular location is the cytoplasm. The enzyme catalyses [protein]-L-isoaspartate + S-adenosyl-L-methionine = [protein]-L-isoaspartate alpha-methyl ester + S-adenosyl-L-homocysteine. Catalyzes the methyl esterification of L-isoaspartyl residues in peptides and proteins that result from spontaneous decomposition of normal L-aspartyl and L-asparaginyl residues. It plays a role in the repair and/or degradation of damaged proteins. The sequence is that of Protein-L-isoaspartate O-methyltransferase from Vibrio campbellii (strain ATCC BAA-1116).